A 117-amino-acid chain; its full sequence is NADH-ubiquinone oxidoreductase chain 3 (117 aa).

3 helical membrane passes run 1-21, 58-78, and 86-106; these read MKFIFMYFIFIILISSILLLL, FLMTMMFLIFDVEIILFLPII, and TMISYLMISIFLILLITTLIL.

The protein belongs to the complex I subunit 3 family.

The protein localises to the mitochondrion membrane. It carries out the reaction a ubiquinone + NADH + 5 H(+)(in) = a ubiquinol + NAD(+) + 4 H(+)(out). Core subunit of the mitochondrial membrane respiratory chain NADH dehydrogenase (Complex I) that is believed to belong to the minimal assembly required for catalysis. Complex I functions in the transfer of electrons from NADH to the respiratory chain. The immediate electron acceptor for the enzyme is believed to be ubiquinone. The protein is NADH-ubiquinone oxidoreductase chain 3 (ND3) of Apis mellifera ligustica (Common honeybee).